Here is a 354-residue protein sequence, read N- to C-terminus: Ornithine cyclodeaminase (354 aa).

L-ornithine contacts are provided by R53 and K77. Residues T92, R120, 147-148, D169, T209, 232-235, K239, and S300 each bind NAD(+); these read AQ and VGGD. R120 serves as a coordination point for L-ornithine. D235 provides a ligand contact to L-ornithine. D235 serves as the catalytic Proton donor/acceptor. V301 is a binding site for L-ornithine.

Belongs to the ornithine cyclodeaminase/mu-crystallin family. It depends on NAD(+) as a cofactor.

The catalysed reaction is L-ornithine = L-proline + NH4(+). It participates in amino-acid biosynthesis; L-proline biosynthesis; L-proline from L-ornithine: step 1/1. Its activity is regulated as follows. Is subject to substrate inhibition. Is regulated by L-arginine, which stimulates enzymatic activity at 0.1-1 mM while inhibits activity at higher concentrations, and has pronounced effects on the optima for pH and temperature and on the Km for L-ornithine. Is not inhibited by L-proline. Catalyzes the conversion of L-ornithine into L-proline with release of ammonia. Is involved in the utilization of nopaline, a catabolic pathway that proceeds through L-arginine and L-ornithine to L-proline. Nopaline is a predominant opine in plant cells transformed with Ti plasmid pTiC58. In Agrobacterium fabrum (strain C58 / ATCC 33970) (Agrobacterium tumefaciens (strain C58)), this protein is Ornithine cyclodeaminase.